A 7192-amino-acid chain; its full sequence is Nonribosomal peptide synthetase gloA (7192 aa).

Residues 1–48 (MTPSRSLENGEKQMNWNESPQTASPKNVLRDSNSNGNYVNGHGTNING) are compositionally biased toward polar residues. The interval 1–52 (MTPSRSLENGEKQMNWNESPQTASPKNVLRDSNSNGNYVNGHGTNINGDGSD) is disordered. Residues 105–181 (HSTSKFKEEF…GLFATANFRP (77 aa)) form the Carrier 1 domain. Ser-142 is subject to O-(pantetheine 4'-phosphoryl)serine. The tract at residues 239–634 (EDVYPCTPLQ…TYTVQCLCNP (396 aa)) is condensation 1. The tract at residues 675–1047 (QDQVNIQPAK…SLMYLGRCDS (373 aa)) is adenylation 1. The Carrier 2 domain maps to 1190 to 1266 (APSTDAEKQV…DLAFVIQRRL (77 aa)). Ser-1227 is subject to O-(pantetheine 4'-phosphoryl)serine. The segment at 1316–1736 (EDIYPCTPLQ…MSWLSDYDEE (421 aa)) is condensation 2. Positions 1758–2154 (QEQTKLRPNA…GRRDTQIKIR (397 aa)) are adenylation 2. The region spanning 2288–2364 (APSTREECLV…ELAELLAKRS (77 aa)) is the Carrier 3 domain. Ser-2325 is modified (O-(pantetheine 4'-phosphoryl)serine). The interval 2407-2829 (VEDVYPCTPL…LIAPEDQEQI (423 aa)) is condensation 3. The segment at 2849–3245 (YKQVMARPQA…GRRDDQIKIR (397 aa)) is adenylation 3. In terms of domain architecture, Carrier 4 spans 3378-3455 (TPSTKMEKVI…DLASVMTEHR (78 aa)). The residue at position 3415 (Ser-3415) is an O-(pantetheine 4'-phosphoryl)serine. The tract at residues 3502–3891 (EDIYPCTALQ…NGVLDQFVYI (390 aa)) is condensation 4. Positions 3920-4320 (QEQALARPTA…ARRDMQVKIR (401 aa)) are adenylation 4. Residues 4453-4529 (LPSTQVELQL…ELAVILDGRK (77 aa)) form the Carrier 5 domain. Ser-4490 bears the O-(pantetheine 4'-phosphoryl)serine mark. A condensation 5 region spans residues 4574 to 4971 (EDIYPCTPLQ…QFEYVVQKFH (398 aa)). Positions 5013-5414 (DDHVAARPMA…GRQDLQVKIR (402 aa)) are adenylation 5. Positions 5551–5627 (APDTDLGRLI…DLVNTLSNRS (77 aa)) constitute a Carrier 6 domain. Position 5588 is an O-(pantetheine 4'-phosphoryl)serine (Ser-5588). Residues 5674–6071 (EDVYPSTPLQ…CVVQRILTQS (398 aa)) form a condensation 6 region. The segment at 6111 to 6507 (QAQVKKSPAA…GRRDLQVKIR (397 aa)) is adenylation 6. One can recognise a Carrier 7 domain in the interval 6645 to 6721 (NPSTTMERQL…DLAVVLTDRL (77 aa)). Position 6682 is an O-(pantetheine 4'-phosphoryl)serine (Ser-6682). The segment at 6795–7178 (NGPCDTRALK…NPLSPVKQVL (384 aa)) is condensation 7.

This sequence belongs to the NRP synthetase family.

The protein operates within mycotoxin biosynthesis. Functionally, nonribosomal peptide synthetase; part of the gene cluster that mediates the biosynthesis of pneumocandins, lipohexapeptides of the echinocandin family that prevent fungal cell wall formation by non-competitive inhibition of beta-1,3-glucan synthase. The 10,12-dimethylmyristoyl side chain is synthesized by the reducing polyketide synthase gloL/GLPKS4. The thioesterase gloN/GLHYD exclusively interacts with gloL/GLPKS4 to maintain turnover of the polyketide side chain. The 10R,12S-dimethylmyristic acid is then transferred to the first thiolation domain of the nonribosomal peptide synthetase gloA/GLNRPS4 by the acyl-AMP ligase gloD/GLligase, followed by its acylation to L-ornithine to trigger elongation of the cyclic hexapeptide. L-ornithine, 4R-hydroxyl-L-proline (generated from L-proline by the dioxygenase gloF/GLOXY2), 3S-hydroxyl-L-homotyrosine (generated by gloG/GLHtyB, gloH/GLHtyA, gloI/GLHtyC, gloJ/GLHtyD and hydroxylated at C-3 by the dioxygenase gloM/GLOXY1), 3R-hydroxyl-L-glutamine (generated from L-glutamine probably by the dioxygenase gloE/GLOXY3) and 3S-hydroxyl-L-proline (generated from L-proline by the dioxygenase gloF/GLOXY2 to yield pneumocandin B0), or 3S-hydroxyl-4S-methyl-L-proline (generated from L-leucine by the dioxygenase gloC/GLOXY4 to yield pneumocandin A0) are sequentially added to the growing chain. The last C domain of gloA/GLNRPS4 is proposed to be responsible for cyclization by condensation to form the peptide bond between L-ornithine and 3S-hydroxyl-4S-methyl-L-proline (for pneumocandin A0) or 3S-hydroxyl-L-proline (for pneumocandin B0). Finally, the subsequent C-4 hydroxylation of 3S-hydroxyl-L-homotyrosine and L-ornithine dihydroxylation at C-4 and C-5 are performed by the cytochrome P450 monooxygenases gloP/GLP450-1 and gloO/GLP450-2, respectively. The polypeptide is Nonribosomal peptide synthetase gloA (Glarea lozoyensis (strain ATCC 20868 / MF5171)).